Reading from the N-terminus, the 338-residue chain is Sorting nexin-15 (338 aa).

In terms of domain architecture, PX spans 1-131; sequence MSRRAKKDDF…EFFRGGEVTR (131 aa). A 1,2-diacyl-sn-glycero-3-phospho-(1D-myo-inositol-3-phosphate) contacts are provided by Arg-52, Ser-54, Arg-88, and Arg-97. Arg-106 carries the post-translational modification Omega-N-methylarginine. The segment at 134-155 is disordered; that stretch reads EVSRDLQILPPPLIPTPPSDEA. The segment covering 142–151 has biased composition (pro residues); the sequence is LPPPLIPTPP. Ser-202 and Ser-228 each carry phosphoserine. The disordered stretch occupies residues 240–270; it reads VQSKRLDQEPWEPGGREEEEAEDGDPAPAYL. Positions 266-338 constitute an MIT domain; sequence APAYLGQATE…RAETLHAHLP (73 aa).

The protein belongs to the sorting nexin family. In terms of assembly, homodimer. Interacts with SNX1, SNX2 and SNX4.

It is found in the cytoplasm. Its subcellular location is the membrane. It localises to the cytoplasmic vesicle membrane. May be involved in several stages of intracellular trafficking. Overexpression of SNX15 disrupts the normal trafficking of proteins from the plasma membrane to recycling endosomes or the TGN. The sequence is that of Sorting nexin-15 (Snx15) from Rattus norvegicus (Rat).